A 392-amino-acid polypeptide reads, in one-letter code: MALKVATAAGGAVKAALRPALLWRPWEVLGSHEAPRRSFSQQTIPPSAKYGGRHTVTMIPGDGIGPELMLHVKSVFRHACVPVDFEEVHVSSTADEEDIRNAIMAIRRNRVALKGNIETNHNLPPSHKSRNNILRTSLDLYANVIHCKSLPGVVTRHRDIDILIVRENTEGEYSSLEHESVAGVVESLKIITKAKSLRIAEYAFQLAQESGRKKVTAVHKANIMKLGDGLFLQCCREVAARYPQITFENMIVDNTTMQLVSRPQQFDVMVMPNLYGNIVNNVCAGLVGGPGLVAGANYGHVYAVFETATRNTGKSIANKNIANPTATLLASCMMLDHLKLHSYATSIRKAVLASMDNENMHTPDIGGQGTTSEAIQDIIRHIRVINGRAVEA.

A mitochondrion-targeting transit peptide spans 1 to 39 (MALKVATAAGGAVKAALRPALLWRPWEVLGSHEAPRRSF). Citrate is bound by residues T119 and N132. Substrate is bound by residues R135, R166, and D253. D253 provides a ligand contact to Mn(2+). Residues N311, T312, and N323 each contribute to the ADP site.

This sequence belongs to the isocitrate and isopropylmalate dehydrogenases family. In terms of assembly, heterooligomer of subunits alpha (IDH3A), beta (IDH3B), and gamma (IDH3G) in the apparent ratio of 2:1:1. The heterodimer containing one IDH3A and one IDH3B subunit and the heterodimer containing one IDH3A and one IDH3G subunit assemble into a heterotetramer (which contains two subunits of IDH3A, one of IDH3B and one of IDH3G) and further into the heterooctamer. It depends on Mg(2+) as a cofactor. Mn(2+) serves as cofactor.

The protein localises to the mitochondrion. Its activity is regulated as follows. The heterotetramer and the heterodimer composed of IDH3A and IDH3G subunits can be allosterically activated by citrate (CIT) or/and ADP, and the two activators can act independently or synergistically. The heterodimer composed of IDH3A and IDH3B subunits cannot be allosterically regulated and the allosteric regulation of the heterotetramer is through the IDH3G subunit and not the IDH3B subunit. The IDH3G subunit contains the allosteric site which consists of a CIT-binding site and an ADP-binding site, and the binding of CIT and ADP causes conformational changes at the allosteric site which are transmitted to the active site in the catalytic subunit (IDH3A) through a cascade of conformational changes at the heterodimer interface, leading to stabilization of the isocitrate-binding at the active site and thus activation of the enzyme. ATP can activate the heterotetramer and the heterodimer composed of IDH3A and IDH3G subunits at low concentrations but inhibits their activities at high concentrations, whereas ATP exhibits only inhibitory effect on the heterodimer composed of IDH3A and IDH3B subunits. Functionally, regulatory subunit which plays a role in the allosteric regulation of the enzyme catalyzing the decarboxylation of isocitrate (ICT) into alpha-ketoglutarate. The heterodimer composed of the alpha (IDH3A) and beta (IDH3B) subunits and the heterodimer composed of the alpha (IDH3A) and gamma (IDH3G) subunits, have considerable basal activity but the full activity of the heterotetramer (containing two subunits of IDH3A, one of IDH3B and one of IDH3G) requires the assembly and cooperative function of both heterodimers. This Bos taurus (Bovine) protein is Isocitrate dehydrogenase [NAD] subunit gamma, mitochondrial (IDH3G).